We begin with the raw amino-acid sequence, 65 residues long: Large ribosomal subunit protein bL35 (65 aa).

Belongs to the bacterial ribosomal protein bL35 family.

The sequence is that of Large ribosomal subunit protein bL35 from Yersinia enterocolitica serotype O:8 / biotype 1B (strain NCTC 13174 / 8081).